Reading from the N-terminus, the 571-residue chain is Urease subunit alpha (571 aa).

Residues 133 to 571 (GGIDTHVHFI…LPLTQRYFLF (439 aa)) enclose the Urease domain. Positions 138, 140, and 221 each coordinate Ni(2+). Residue Lys-221 is modified to N6-carboxylysine. Position 223 (His-223) interacts with substrate. Residues His-250 and His-276 each contribute to the Ni(2+) site. Residue His-324 is the Proton donor of the active site. Asp-364 serves as a coordination point for Ni(2+).

It belongs to the metallo-dependent hydrolases superfamily. Urease alpha subunit family. Heterotrimer of UreA (gamma), UreB (beta) and UreC (alpha) subunits. Three heterotrimers associate to form the active enzyme. Ni cation is required as a cofactor. Post-translationally, carboxylation allows a single lysine to coordinate two nickel ions.

Its subcellular location is the cytoplasm. It carries out the reaction urea + 2 H2O + H(+) = hydrogencarbonate + 2 NH4(+). It participates in nitrogen metabolism; urea degradation; CO(2) and NH(3) from urea (urease route): step 1/1. The sequence is that of Urease subunit alpha from Staphylococcus epidermidis (strain ATCC 35984 / DSM 28319 / BCRC 17069 / CCUG 31568 / BM 3577 / RP62A).